We begin with the raw amino-acid sequence, 66 residues long: uncharacterized protein (66 aa).

A helical membrane pass occupies residues 32 to 49 (WAFSLLIAGSAFLWIYMR).

The protein resides in the membrane. This is an uncharacterized protein from Bacillus subtilis (strain 168).